A 239-amino-acid polypeptide reads, in one-letter code: Serine protease SplC (239 aa).

The signal sequence occupies residues 1-36 (MNKNIVIKSMAALAILTSVTGINAAVVDETQQIANA). Catalysis depends on charge relay system residues His75, Asp113, and Ser193.

Belongs to the peptidase S1B family.

The protein resides in the secreted. This chain is Serine protease SplC (splC), found in Staphylococcus aureus (strain bovine RF122 / ET3-1).